Consider the following 1705-residue polypeptide: Alpha-protein kinase 3 (1705 aa).

Residues 1–10 (MGSRRAPSRG) show a composition bias toward low complexity. The interval 1 to 33 (MGSRRAPSRGWGAGGRSGAGGDGEDDGPVWIPS) is disordered. The segment covering 11-21 (WGAGGRSGAGG) has biased composition (gly residues). The region spanning 77–168 (PLFETTLKSR…GIVSCSGVLE (92 aa)) is the Ig-like 1 domain. Residues 211–221 (DTLRKLSPDRF) are compositionally biased toward basic and acidic residues. Disordered stretches follow at residues 211 to 244 (DTLRKLSPDRFQRKRRLSGAQAPGPSVPTREPEG), 308 to 749 (LKEE…GPRA), 792 to 845 (GPLS…ERPG), 1082 to 1145 (GLAS…KFPG), and 1173 to 1226 (RAAG…MLEV). At serine 228 the chain carries Phosphoserine. Residues 308–342 (LKEESGAKKKKKDEESKQGLRKPELEKAAQSRRSS) are compositionally biased toward basic and acidic residues. Residues 370-382 (PRGRAARGPGSSG) show a composition bias toward low complexity. Polar residues predominate over residues 495 to 504 (DSKPISSLSQ). Positions 557-579 (TTTAPTMSASSSSDVASIGVSTS) are enriched in low complexity. A compositionally biased stretch (polar residues) spans 598–609 (TSANQRTGSKKN). Over residues 647–657 (ESKRPQSDRSA) the composition is skewed to basic and acidic residues. Residues 666 to 676 (RAETQLETTQA) show a composition bias toward polar residues. A compositionally biased stretch (basic and acidic residues) spans 679-700 (KIQEDRKAQADKGTQEDRRMQG). Over residues 708 to 729 (KGTQSEGSAPTAMEGQSEQEVA) the composition is skewed to polar residues. Pro residues predominate over residues 736 to 745 (SRTPKLPPTA). Basic and acidic residues predominate over residues 829–844 (AKQEDSPFQCPKEERP). Residues 1120-1131 (GQAAPGQGPSAE) are compositionally biased toward low complexity. Serine 1222 carries the post-translational modification Phosphoserine. The 89-residue stretch at 1274-1362 (PQVIRKIRVE…GSASTDFCLS (89 aa)) folds into the Ig-like 2 domain. A disulfide bond links cysteine 1296 and cysteine 1346. Residues 1390–1625 (KGLADSGCWG…YCELLGLTPL (236 aa)) enclose the Alpha-type protein kinase domain. The tract at residues 1628 to 1705 (PEAAHPQAKA…EEGSKAQGMR (78 aa)) is disordered. Over residues 1664–1696 (PQGTRKSAPSSKATPQASEPVTTQLLGQPPTQE) the composition is skewed to polar residues.

This sequence belongs to the protein kinase superfamily. Alpha-type protein kinase family. ALPK subfamily.

It localises to the nucleus. The catalysed reaction is L-seryl-[protein] + ATP = O-phospho-L-seryl-[protein] + ADP + H(+). It carries out the reaction L-threonyl-[protein] + ATP = O-phospho-L-threonyl-[protein] + ADP + H(+). Involved in cardiomyocyte differentiation. The sequence is that of Alpha-protein kinase 3 from Homo sapiens (Human).